A 335-amino-acid polypeptide reads, in one-letter code: GTPase Obg (335 aa).

One can recognise an Obg domain in the interval 1 to 159 (MKFVDSAKIS…YELEMELKLM (159 aa)). In terms of domain architecture, OBG-type G spans 160–323 (ADVGLVGFPN…LKDELWRQVS (164 aa)). GTP is bound by residues 166-173 (GFPNAGKS), 191-195 (FTTLV), 213-216 (DIPG), 280-283 (TKMD), and 304-306 (SSV). Serine 173 and threonine 193 together coordinate Mg(2+).

It belongs to the TRAFAC class OBG-HflX-like GTPase superfamily. OBG GTPase family. Monomer. Mg(2+) serves as cofactor.

Its subcellular location is the cytoplasm. Functionally, an essential GTPase which binds GTP, GDP and possibly (p)ppGpp with moderate affinity, with high nucleotide exchange rates and a fairly low GTP hydrolysis rate. Plays a role in control of the cell cycle, stress response, ribosome biogenesis and in those bacteria that undergo differentiation, in morphogenesis control. In Chlorobaculum tepidum (strain ATCC 49652 / DSM 12025 / NBRC 103806 / TLS) (Chlorobium tepidum), this protein is GTPase Obg.